Reading from the N-terminus, the 403-residue chain is Rhomboid-like protein 15 (403 aa).

5 consecutive transmembrane segments (helical) span residues 22 to 42, 70 to 90, 103 to 123, 141 to 161, and 176 to 196; these read IPFL…ICLL, AIIF…LVPM, LLYL…LIAS, AIGF…LSGV, and LYPW…SLLG. Serine 145 serves as the catalytic Nucleophile. The active-site Charge relay system is histidine 197. Residues 198-218 form a helical membrane-spanning segment; sequence LCGILSGFSYSYGLFNFLMPG. The interval 282-316 is disordered; it reads EASNQSSEDSRFPGRGRTLSTARDPTAPAGETDPN. The UBA domain maps to 361 to 401; sequence AASEEQIQKLVAMGFDRTQVEVALAAADDDLTVAVEILMSQ.

The protein belongs to the peptidase S54 family.

The protein localises to the membrane. In terms of biological role, probable rhomboid-type serine protease that catalyzes intramembrane proteolysis. May function in senescence. This Arabidopsis thaliana (Mouse-ear cress) protein is Rhomboid-like protein 15.